The primary structure comprises 310 residues: Methionyl-tRNA formyltransferase (310 aa).

Position 109–112 (109–112 (SLLP)) interacts with (6S)-5,6,7,8-tetrahydrofolate.

It belongs to the Fmt family.

The catalysed reaction is L-methionyl-tRNA(fMet) + (6R)-10-formyltetrahydrofolate = N-formyl-L-methionyl-tRNA(fMet) + (6S)-5,6,7,8-tetrahydrofolate + H(+). Attaches a formyl group to the free amino group of methionyl-tRNA(fMet). The formyl group appears to play a dual role in the initiator identity of N-formylmethionyl-tRNA by promoting its recognition by IF2 and preventing the misappropriation of this tRNA by the elongation apparatus. This Pseudomonas paraeruginosa (strain DSM 24068 / PA7) (Pseudomonas aeruginosa (strain PA7)) protein is Methionyl-tRNA formyltransferase.